A 429-amino-acid polypeptide reads, in one-letter code: Histidinol dehydrogenase (429 aa).

3 residues coordinate NAD(+): Tyr131, Gln193, and Asn216. Ser239, Gln261, and His264 together coordinate substrate. Zn(2+) contacts are provided by Gln261 and His264. Active-site proton acceptor residues include Glu327 and His328. His328, Asp361, Glu415, and His420 together coordinate substrate. Asp361 provides a ligand contact to Zn(2+). His420 provides a ligand contact to Zn(2+).

It belongs to the histidinol dehydrogenase family. The cofactor is Zn(2+).

The catalysed reaction is L-histidinol + 2 NAD(+) + H2O = L-histidine + 2 NADH + 3 H(+). It functions in the pathway amino-acid biosynthesis; L-histidine biosynthesis; L-histidine from 5-phospho-alpha-D-ribose 1-diphosphate: step 9/9. Catalyzes the sequential NAD-dependent oxidations of L-histidinol to L-histidinaldehyde and then to L-histidine. This chain is Histidinol dehydrogenase (hisD), found in Methanocaldococcus jannaschii (strain ATCC 43067 / DSM 2661 / JAL-1 / JCM 10045 / NBRC 100440) (Methanococcus jannaschii).